An 80-amino-acid chain; its full sequence is Dolichol-phosphate mannose synthase subunit 2 (80 aa).

A run of 2 helical transmembrane segments spans residues 10–30 (LLLSSISLSIFTYYTFWVIIL) and 50–70 (ILVPVFAGIALLSLISVFIGM).

It belongs to the DPM2 family. In terms of assembly, component of the dolichol-phosphate mannose (DPM) synthase complex composed of DPMS1, DPMS2 and DPMS3; in the complex interacts directly with DPMS3. Associates with the GPI-GlcNAc transferase (GPI-GnT) complex.

It localises to the endoplasmic reticulum membrane. Its pathway is protein modification; protein glycosylation. Regulates the biosynthesis of dolichol phosphate-mannose. Regulatory subunit of the dolichol-phosphate mannose (DPM) synthase complex; essential for the ER localization and stable expression of DPMS1. The chain is Dolichol-phosphate mannose synthase subunit 2 from Arabidopsis thaliana (Mouse-ear cress).